A 296-amino-acid chain; its full sequence is Probable AP endonuclease (296 aa).

Cysteine 16 and cysteine 20 are oxidised to a cystine. Zn(2+) is bound by residues histidine 78, histidine 115, glutamate 142, histidine 182, histidine 218, aspartate 231, histidine 233, and glutamate 271.

This sequence belongs to the AP endonuclease 2 family. Requires Zn(2+) as cofactor.

It localises to the host nucleus. Its subcellular location is the host cytoplasm. The protein localises to the virion. In terms of biological role, endonuclease of the viral base excision repair system that catalyzes DNA cleavage reaction at the apurinic or apyrimidinic sites (AP sites). Cleaves phosphodiester bonds on the 5' side of AP sites. In addition to endonuclease activity, the AP endonuclease has a proofreading 3'-5' exonuclease activity that is considerably more efficient in the elimination of a mismatch than in that of a correctly paired base. Displays 3'-phosphatase and 3'-repair diesterase activities. The single nucleotide gaps generated by the AP endonuclease are filled by the viral repair DNA polymerase X and the DNA ligase. This Ornithodoros (relapsing fever ticks) protein is Probable AP endonuclease.